The following is a 288-amino-acid chain: Shikimate kinase (288 aa).

81–91 (PVASGLKSSSA) lines the ATP pocket.

This sequence belongs to the GHMP kinase family. Archaeal shikimate kinase subfamily.

The protein localises to the cytoplasm. The enzyme catalyses shikimate + ATP = 3-phosphoshikimate + ADP + H(+). It functions in the pathway metabolic intermediate biosynthesis; chorismate biosynthesis; chorismate from D-erythrose 4-phosphate and phosphoenolpyruvate: step 5/7. The protein is Shikimate kinase of Methanothrix thermoacetophila (strain DSM 6194 / JCM 14653 / NBRC 101360 / PT) (Methanosaeta thermophila).